The following is a 146-amino-acid chain: Large ribosomal subunit protein bL9 (146 aa).

Belongs to the bacterial ribosomal protein bL9 family.

Binds to the 23S rRNA. The sequence is that of Large ribosomal subunit protein bL9 from Flavobacterium johnsoniae (strain ATCC 17061 / DSM 2064 / JCM 8514 / BCRC 14874 / CCUG 350202 / NBRC 14942 / NCIMB 11054 / UW101) (Cytophaga johnsonae).